A 508-amino-acid chain; its full sequence is NADH-quinone oxidoreductase subunit N 1 (508 aa).

The next 13 membrane-spanning stretches (helical) occupy residues 2–22 (ILGP…GALL), 47–67 (ALGT…VGFV), 87–107 (FTLF…LLAG), 126–146 (FSTV…LFLG), 175–195 (FLLG…IYGA), 220–240 (ALLL…VSAV), 260–280 (FMAV…LLGA), 291–311 (AGWP…ANLI), 321–341 (MLAY…AATV), 351–371 (VMFY…TLIL), 396–416 (ALAF…AGFF), 431–453 (YTLS…RVLV), and 479–499 (LVVS…SLGI).

Belongs to the complex I subunit 2 family. NDH-1 is composed of 14 different subunits. Subunits NuoA, H, J, K, L, M, N constitute the membrane sector of the complex.

It is found in the cell inner membrane. The catalysed reaction is a quinone + NADH + 5 H(+)(in) = a quinol + NAD(+) + 4 H(+)(out). NDH-1 shuttles electrons from NADH, via FMN and iron-sulfur (Fe-S) centers, to quinones in the respiratory chain. The immediate electron acceptor for the enzyme in this species is believed to be ubiquinone. Couples the redox reaction to proton translocation (for every two electrons transferred, four hydrogen ions are translocated across the cytoplasmic membrane), and thus conserves the redox energy in a proton gradient. The chain is NADH-quinone oxidoreductase subunit N 1 from Sorangium cellulosum (strain So ce56) (Polyangium cellulosum (strain So ce56)).